Here is a 137-residue protein sequence, read N- to C-terminus: Large ribosomal subunit protein uL16c (137 aa).

Belongs to the universal ribosomal protein uL16 family. In terms of assembly, part of the 50S ribosomal subunit.

It is found in the plastid. It localises to the chloroplast. The protein is Large ribosomal subunit protein uL16c of Hordeum vulgare (Barley).